A 341-amino-acid chain; its full sequence is Formimidoylglutamase (341 aa).

6 residues coordinate Mn(2+): histidine 133, aspartate 162, histidine 164, aspartate 166, cysteine 253, and aspartate 255.

Belongs to the arginase family. Requires Mn(2+) as cofactor.

It catalyses the reaction N-formimidoyl-L-glutamate + H2O = formamide + L-glutamate. The protein operates within amino-acid degradation; L-histidine degradation into L-glutamate; L-glutamate from N-formimidoyl-L-glutamate (hydrolase route): step 1/1. Catalyzes the conversion of N-formimidoyl-L-glutamate to L-glutamate and formamide. In Aromatoleum aromaticum (strain DSM 19018 / LMG 30748 / EbN1) (Azoarcus sp. (strain EbN1)), this protein is Formimidoylglutamase.